An 887-amino-acid chain; its full sequence is DNA mismatch repair protein MutS (887 aa).

An ATP-binding site is contributed by glycine 626–serine 633.

Belongs to the DNA mismatch repair MutS family.

Its function is as follows. This protein is involved in the repair of mismatches in DNA. It is possible that it carries out the mismatch recognition step. This protein has a weak ATPase activity. The polypeptide is DNA mismatch repair protein MutS (Methanococcoides burtonii (strain DSM 6242 / NBRC 107633 / OCM 468 / ACE-M)).